The following is a 551-amino-acid chain: Adenine deaminase (551 aa).

Belongs to the metallo-dependent hydrolases superfamily. Adenine deaminase family. Mn(2+) is required as a cofactor.

It carries out the reaction adenine + H2O + H(+) = hypoxanthine + NH4(+). The chain is Adenine deaminase from Leuconostoc citreum (strain KM20).